We begin with the raw amino-acid sequence, 294 residues long: Acetyl-coenzyme A carboxylase carboxyl transferase subunit beta (294 aa).

The CoA carboxyltransferase N-terminal domain occupies 30-294 (IMTKCPECKK…PGVGGEVDGE (265 aa)). Cysteine 34, cysteine 37, cysteine 53, and cysteine 56 together coordinate Zn(2+). The segment at 34–56 (CPECKKIMYTKELQKNLMVCNYC) adopts a C4-type zinc-finger fold.

This sequence belongs to the AccD/PCCB family. As to quaternary structure, acetyl-CoA carboxylase is a heterohexamer composed of biotin carboxyl carrier protein (AccB), biotin carboxylase (AccC) and two subunits each of ACCase subunit alpha (AccA) and ACCase subunit beta (AccD). It depends on Zn(2+) as a cofactor.

The protein localises to the cytoplasm. It carries out the reaction N(6)-carboxybiotinyl-L-lysyl-[protein] + acetyl-CoA = N(6)-biotinyl-L-lysyl-[protein] + malonyl-CoA. It participates in lipid metabolism; malonyl-CoA biosynthesis; malonyl-CoA from acetyl-CoA: step 1/1. Functionally, component of the acetyl coenzyme A carboxylase (ACC) complex. Biotin carboxylase (BC) catalyzes the carboxylation of biotin on its carrier protein (BCCP) and then the CO(2) group is transferred by the transcarboxylase to acetyl-CoA to form malonyl-CoA. The polypeptide is Acetyl-coenzyme A carboxylase carboxyl transferase subunit beta (Listeria monocytogenes serovar 1/2a (strain ATCC BAA-679 / EGD-e)).